Reading from the N-terminus, the 565-residue chain is Putative pentatricopeptide repeat-containing protein At3g05240 (565 aa).

PPR repeat units lie at residues 37–70 (NVIP…IDCP), 71–105 (SVYI…GYSP), 106–140 (DYFT…GFEV), 141–171 (NMYV…IPQW), 172–206 (NVVA…GVKA), 207–241 (NETI…GFDP), 250–280 (NVIL…MPER), 281–315 (TLVS…GIAP), 316–350 (DKVT…GFVK), 351–381 (DAAI…LEKK), 382–416 (DTIA…GNAT), 418–448 (DGIT…MRDL), and 454–484 (TVEH…MPVK). Positions 489–564 (IWGALLNGCD…VLGHSSVETM (76 aa)) are type E motif.

This sequence belongs to the PPR family. PCMP-E subfamily.

The sequence is that of Putative pentatricopeptide repeat-containing protein At3g05240 (PCMP-E82) from Arabidopsis thaliana (Mouse-ear cress).